The chain runs to 266 residues: Putative carbamate hydrolase RutD (266 aa).

Residues 14–119 form the AB hydrolase-1 domain; that stretch reads PVVVLSAGLG…LVNGWLSLSP (106 aa).

This sequence belongs to the AB hydrolase superfamily. Hydrolase RutD family.

The catalysed reaction is carbamate + 2 H(+) = NH4(+) + CO2. Its function is as follows. Involved in pyrimidine catabolism. May facilitate the hydrolysis of carbamate, a reaction that can also occur spontaneously. The chain is Putative carbamate hydrolase RutD from Klebsiella pneumoniae subsp. pneumoniae (strain ATCC 700721 / MGH 78578).